The chain runs to 417 residues: Phosphoglycerate kinase (417 aa).

14 residues coordinate (2R)-3-phosphoglycerate: Val-23, Asp-24, Phe-25, Asn-26, Gln-39, Arg-40, Ser-63, His-64, Gly-66, Arg-67, Leu-122, Arg-123, His-170, and Arg-171. ADP is bound at residue Gly-214. CDP is bound at residue Gly-214. AMP-binding residues include Ala-215 and Lys-216. Ala-215 is a binding site for ATP. Residue Ala-215 participates in Mg(2+) binding. A CDP-binding site is contributed by Asp-219. Position 219 (Asp-219) interacts with Mg(2+). Lys-220 is an AMP binding site. Residue Lys-220 participates in ATP binding. Gly-238 is an ADP binding site. Gly-238 is a binding site for CDP. Positions 239 and 313 each coordinate AMP. ATP-binding residues include Gly-239 and Gly-313. CDP is bound by residues Gly-338 and Phe-343. Phe-343 serves as a coordination point for ADP. Glu-344 is a binding site for AMP. Residues Glu-344, Asp-375, and Thr-376 each contribute to the ATP site. A Mg(2+)-binding site is contributed by Asp-375.

Belongs to the phosphoglycerate kinase family. Monomer. The cofactor is Mg(2+).

Its subcellular location is the cytoplasm. It is found in the mitochondrion. The catalysed reaction is (2R)-3-phosphoglycerate + ATP = (2R)-3-phospho-glyceroyl phosphate + ADP. Its pathway is carbohydrate degradation; glycolysis; pyruvate from D-glyceraldehyde 3-phosphate: step 2/5. In terms of biological role, catalyzes one of the two ATP producing reactions in the glycolytic pathway via the reversible conversion of 1,3-diphosphoglycerate to 3-phosphoglycerate. Both L- and D- forms of purine and pyrimidine nucleotides can be used as substrates, but the activity is much lower on pyrimidines. Negatively regulates the biosynthesis of acetyl-CoA from pyruvate in the mitochondrion. This Penicillium citrinum protein is Phosphoglycerate kinase (PGKA).